Here is a 906-residue protein sequence, read N- to C-terminus: Protein kintoun (906 aa).

Ser-376 is subject to Phosphoserine. 2 disordered regions span residues 614–691 (QQQK…RKQR) and 793–906 (RKKN…DEDM). Over residues 618–631 (KLNKKQRKRNKKQR) the composition is skewed to basic residues. Basic and acidic residues predominate over residues 639-655 (EELKAAQEELQLQHEKQ). The segment covering 793–808 (RKKNQKRRDCKLRAQQ) has biased composition (basic residues). At Ser-812 the chain carries Phosphoserine. Positions 837–850 (ANAQYFKQPNNNNG) are enriched in polar residues. 2 stretches are compositionally biased toward basic and acidic residues: residues 851-865 (HDQD…HDSG) and 875-887 (NNEE…EADA). Positions 894–906 (EMDDDDEDEDEDM) are enriched in acidic residues.

The protein belongs to the PIH1 family. Kintoun subfamily. Interacts with Pp1alpha-96A, Pp1-87B, Pp1-13C and flw.

It localises to the cytoplasm. Functionally, required for cytoplasmic pre-assembly of axonemal dyneins, thereby playing a central role in motility in cilia and flagella. Involved in pre-assembly of dynein arm complexes in the cytoplasm before intraflagellar transport loads them for the ciliary compartment. This is Protein kintoun from Drosophila virilis (Fruit fly).